A 522-amino-acid chain; its full sequence is Ribonuclease Y (522 aa).

A helical transmembrane segment spans residues 3 to 23; it reads ELIMYILATAVVSIGVGIVAG. The 61-residue stretch at 212–272 folds into the KH domain; it reads CVSIFNIESD…VRREVARLSL (61 aa). The region spanning 338–431 is the HD domain; the sequence is LLQHSREVAK…VQVCDAISGA (94 aa).

This sequence belongs to the RNase Y family.

The protein localises to the cell membrane. Endoribonuclease that initiates mRNA decay. The polypeptide is Ribonuclease Y (Cytophaga hutchinsonii (strain ATCC 33406 / DSM 1761 / CIP 103989 / NBRC 15051 / NCIMB 9469 / D465)).